Here is a 496-residue protein sequence, read N- to C-terminus: Latent membrane protein 2 (496 aa).

The interval 1 to 108 (MGSLEMVPMG…PPYSPRDDSS (108 aa)) is disordered. The Cytoplasmic portion of the chain corresponds to 1 to 123 (MGSLEMVPMG…EAGRGSMNPV (123 aa)). Residues 27-41 (NNSQYPSASGSSGNT) are compositionally biased toward polar residues. Positions 97–101 (PPPPY) match the PPxY motif motif. Y112 bears the Phosphotyrosine; by host mark. Residues 124 to 144 (CLPVIVAPYLFWLAAIAASCF) form a helical membrane-spanning segment. Topologically, residues 145 to 147 (TAS) are extracellular. Residues 148–168 (VSTVVTATGLALSLLLLAAVA) form a helical membrane-spanning segment. Over 169-177 (SSYAAAQRK) the chain is Cytoplasmic. Residues 178 to 197 (LLTPVTVLTAVVFFAICLTW) traverse the membrane as a helical segment. The Extracellular segment spans residues 198 to 210 (RIEDPPFNSLLFA). Residues 211 to 231 (LLAAAGGLQGIYVLVMLVLLI) traverse the membrane as a helical segment. The Cytoplasmic segment spans residues 232–240 (LAYRRRWRR). The chain crosses the membrane as a helical span at residues 241–261 (LTVCGGIMFLACVLVLIVDAV). The Extracellular segment spans residues 262-266 (LQLSP). A helical membrane pass occupies residues 267–287 (LLGAVTVVSMTLLLLAFVLWL). Residues 288–295 (SSPGGLGT) are Cytoplasmic-facing. Residues 296–316 (LGAALLTLAAALALLASLILG) traverse the membrane as a helical segment. A topological domain (extracellular) is located at residue T317. Residues 318–338 (LNLTTMFLLMLLWTLVVLLIC) form a helical membrane-spanning segment. Over 339–353 (SSCSSCPLTKILLAR) the chain is Cytoplasmic. The helical transmembrane segment at 354 to 374 (LFLYALALLLLASALIAGGSI) threads the bilayer. The Extracellular portion of the chain corresponds to 375–387 (LQTNFKSLSSTEF). The chain crosses the membrane as a helical span at residues 388–408 (IPNLFCMLLLIVAGILFILAI). Over 409–421 (LTEWGSGNRTYGP) the chain is Cytoplasmic. The chain crosses the membrane as a helical span at residues 422–442 (VFMCLGGLLTMVAGAVWLTVM). The Extracellular portion of the chain corresponds to 443–448 (TNTLLS). A helical membrane pass occupies residues 449–469 (AWILTAGFLIFLIGFALFGVI). Residues 470-496 (RCCRYCCYYCLTLESEERPPTPYRNTV) are Cytoplasmic-facing.

Belongs to the herpesviridae LMP-2 family. The cytoplasmic N-terminal domain interacts with human SRC family protein tyrosine kinases SYK and LYN. Binds human ITCH, WWP2 and NEDD4L. Phosphorylated on cytoplasmic N-terminal tyrosine residues, possibly by human LYN. Post-translationally, can be ubiquitinated by human ITCH and WWP2 on the N-terminus in a lysine-independent manner.

It is found in the host cell membrane. The protein localises to the host endomembrane system. Its subcellular location is the host cytoplasm. It localises to the host perinuclear region. Functionally, maintains EBV latent infection of B-lymphocyte, by preventing lytic reactivation of the virus in response to surface immunoglobulin (sIg) cross-linking. Acts like a dominant negative inhibitor of the sIg-associated protein tyrosine kinases, LYN and SYK. Also blocks translocation of the B-cell antigen receptor (BCR) into lipid rafts, preventing the subsequent signaling and accelerated internalization of the BCR upon BCR cross-linking. Serves as a molecular scaffold to recruit SYK, LYN and E3 protein-ubiquitin ligases, such as ITCH and NEDD4L, leading to ubiquitination and potential degradation of both tyrosines kinases. Possesses a constitutive signaling activity in non-transformed cells, inducing bypass of normal B lymphocyte developmental checkpoints allowing immunoglobulin-negative cells to colonize peripheral lymphoid organs. May be a negative regulator of isoform LMP2A. This chain is Latent membrane protein 2 (LMP2), found in Homo sapiens (Human).